A 241-amino-acid chain; its full sequence is Gamma-interferon-inducible lysosomal thiol reductase-like protein (241 aa).

The N-terminal stretch at 1–18 (MLFKSLLLLSVYAVTCYG) is a signal peptide. N105 and N152 each carry an N-linked (GlcNAc...) asparagine glycan. The helical transmembrane segment at 218–235 (STGSAISSLGMIVTVVAV) threads the bilayer.

Belongs to the GILT family. As to expression, salivary gland (at protein level). Low-level expression in midgut (at protein level). Expressed in head and leg tissues. Ovary. Fat body. In terms of tissue distribution, (Microbial infection) Detected with Plasmodium berghei sporozoites isolated from the saliva of infected Anopheles gambiae mosquitoes (at protein level).

The protein localises to the membrane. Required for normal development of ovary and testis. In terms of biological role, (Microbial infection) Interacts with the surface of Plasmodium berghei sporozoites. Reduces P.berghei sporozoite cell traversal activity and transmission. Limits the motility of P.berghei sporozoites. Decreases the levels of host liver infection by P.berghei sporozoites. Does not affect P.berghei sporozoite viability. Indirectly promotes P.berghei survival in mosquitoes by influencing ovarian development and the subsequent production of 20-hydroxyecdysone and vitellogenin, which, in turn, modulates TEP1-dependent parasite killing. Promotes P.berghei infection in mosquitoes, most likely impacting the oocyst stage of parasite development. Functionally, (Microbial infection) Promotes Plasmodium falciparum survival in mosquitoes. The sequence is that of Gamma-interferon-inducible lysosomal thiol reductase-like protein from Anopheles gambiae (African malaria mosquito).